Reading from the N-terminus, the 313-residue chain is Methionyl-tRNA formyltransferase (313 aa).

113–116 (SLLP) is a (6S)-5,6,7,8-tetrahydrofolate binding site.

It belongs to the Fmt family.

The enzyme catalyses L-methionyl-tRNA(fMet) + (6R)-10-formyltetrahydrofolate = N-formyl-L-methionyl-tRNA(fMet) + (6S)-5,6,7,8-tetrahydrofolate + H(+). In terms of biological role, attaches a formyl group to the free amino group of methionyl-tRNA(fMet). The formyl group appears to play a dual role in the initiator identity of N-formylmethionyl-tRNA by promoting its recognition by IF2 and preventing the misappropriation of this tRNA by the elongation apparatus. The polypeptide is Methionyl-tRNA formyltransferase (Francisella tularensis subsp. mediasiatica (strain FSC147)).